A 144-amino-acid polypeptide reads, in one-letter code: Large ribosomal subunit protein uL15 (144 aa).

Positions 1–60 (MRLNSLRPAAGSRPDANRVGRGAGTGNGKTAGRGHKGQHSRSGGFTKVGFEGGQMPLQRR) are disordered. Positions 21 to 31 (RGAGTGNGKTA) are enriched in gly residues.

Belongs to the universal ribosomal protein uL15 family. Part of the 50S ribosomal subunit.

Binds to the 23S rRNA. This chain is Large ribosomal subunit protein uL15, found in Alkalilimnicola ehrlichii (strain ATCC BAA-1101 / DSM 17681 / MLHE-1).